The chain runs to 786 residues: Neprilysin-3 (786 aa).

Over 1-52 (MTRYKQTEFTEDDSSSIGGIQLNEATGHTGMQIRYHTARATWNWRSRNKTEK) the chain is Cytoplasmic. The helical; Signal-anchor for type II membrane protein transmembrane segment at 53 to 73 (WLLITTFVMAITIFTLLIVLF) threads the bilayer. The Extracellular segment spans residues 74 to 786 (TDGGSSDATK…MNPTEKCEVW (713 aa)). The Peptidase M13 domain occupies 102-786 (PCLNKHCIFA…MNPTEKCEVW (685 aa)). 5 disulfides stabilise this stretch: Cys103-Cys108, Cys126-Cys771, Cys134-Cys731, Cys190-Cys450, and Cys659-Cys783. N-linked (GlcNAc...) asparagine glycans are attached at residues Asn216, Asn226, Asn256, Asn279, Asn305, Asn325, Asn356, Asn388, Asn496, and Asn569. His622 provides a ligand contact to Zn(2+). Glu623 is an active-site residue. 2 residues coordinate Zn(2+): His626 and Glu682. Asp686 (proton donor) is an active-site residue. Asn715 carries an N-linked (GlcNAc...) asparagine glycan.

Belongs to the peptidase M13 family. Requires Zn(2+) as cofactor.

The protein localises to the cell membrane. The catalysed reaction is Preferential cleavage of polypeptides between hydrophobic residues, particularly with Phe or Tyr at P1'.. In terms of biological role, metalloendoprotease which is required in the dorsal paired medial neurons for the proper formation of long-term (LTM) and middle-term memories (MTM). Also required in the mushroom body neurons where it functions redundantly with neprilysins Nep2 and Nep4 in normal LTM formation. The protein is Neprilysin-3 of Drosophila melanogaster (Fruit fly).